We begin with the raw amino-acid sequence, 82 residues long: Large ribosomal subunit protein bL28 (82 aa).

The protein belongs to the bacterial ribosomal protein bL28 family.

This chain is Large ribosomal subunit protein bL28, found in Vesicomyosocius okutanii subsp. Calyptogena okutanii (strain HA).